Consider the following 158-residue polypeptide: Small ribosomal subunit protein uS7 (158 aa).

The protein belongs to the universal ribosomal protein uS7 family. In terms of assembly, part of the 30S ribosomal subunit. Contacts proteins S9 and S11.

Its function is as follows. One of the primary rRNA binding proteins, it binds directly to 16S rRNA where it nucleates assembly of the head domain of the 30S subunit. Is located at the subunit interface close to the decoding center, probably blocks exit of the E-site tRNA. The sequence is that of Small ribosomal subunit protein uS7 from Acidiphilium cryptum (strain JF-5).